Consider the following 208-residue polypeptide: Small ribosomal subunit protein uS4 (208 aa).

One can recognise an S4 RNA-binding domain in the interval 98–158 (RRLDNIAYRL…EKSRKVACIN (61 aa)).

The protein belongs to the universal ribosomal protein uS4 family. Part of the 30S ribosomal subunit. Contacts protein S5. The interaction surface between S4 and S5 is involved in control of translational fidelity.

Its function is as follows. One of the primary rRNA binding proteins, it binds directly to 16S rRNA where it nucleates assembly of the body of the 30S subunit. In terms of biological role, with S5 and S12 plays an important role in translational accuracy. The sequence is that of Small ribosomal subunit protein uS4 from Geotalea uraniireducens (strain Rf4) (Geobacter uraniireducens).